The primary structure comprises 197 residues: UPF0314 protein NGR_c32320 (197 aa).

3 consecutive transmembrane segments (helical) span residues W16–M36, W66–L86, and L152–I172.

The protein belongs to the UPF0314 family.

The protein resides in the cell membrane. The sequence is that of UPF0314 protein NGR_c32320 from Sinorhizobium fredii (strain NBRC 101917 / NGR234).